A 473-amino-acid chain; its full sequence is Photosystem II CP43 reaction center protein (473 aa).

Positions 1-14 (MKTLYSLRRFYPVE) are excised as a propeptide. Thr-15 is modified (N-acetylthreonine). Phosphothreonine is present on Thr-15. The next 5 helical transmembrane spans lie at 69-93 (LFEV…PHLA), 134-155 (LLGP…KDRN), 178-200 (KALY…RRIT), 255-275 (KPFA…LSYS), and 291-312 (WFNN…ASQA). [CaMn4O5] cluster is bound at residue Glu-367. A helical transmembrane segment spans residues 447-471 (RARAAAAGFEKGIDRDFEPVLFMTP).

This sequence belongs to the PsbB/PsbC family. PsbC subfamily. In terms of assembly, PSII is composed of 1 copy each of membrane proteins PsbA, PsbB, PsbC, PsbD, PsbE, PsbF, PsbH, PsbI, PsbJ, PsbK, PsbL, PsbM, PsbT, PsbX, PsbY, PsbZ, Psb30/Ycf12, at least 3 peripheral proteins of the oxygen-evolving complex and a large number of cofactors. It forms dimeric complexes. Requires Binds multiple chlorophylls and provides some of the ligands for the Ca-4Mn-5O cluster of the oxygen-evolving complex. It may also provide a ligand for a Cl- that is required for oxygen evolution. PSII binds additional chlorophylls, carotenoids and specific lipids. as cofactor.

The protein resides in the plastid. It localises to the chloroplast thylakoid membrane. Functionally, one of the components of the core complex of photosystem II (PSII). It binds chlorophyll and helps catalyze the primary light-induced photochemical processes of PSII. PSII is a light-driven water:plastoquinone oxidoreductase, using light energy to abstract electrons from H(2)O, generating O(2) and a proton gradient subsequently used for ATP formation. The polypeptide is Photosystem II CP43 reaction center protein (Nuphar advena (Common spatterdock)).